Reading from the N-terminus, the 231-residue chain is MTQQRVSSVFIETVPIVLASASPRRRSLLEQLGLLFKIVSVDSEPLPLSSEHPLEYVIRAAKVKAFAAAALEPRSVIIAADTVVIYTKDDVFEIIGKPQSGNDSFSMLSRFQGGKHQVITGCCIVWPLEENITSVQYEIFYDTASIQFGQWDKDILSSYVSTGESNDKAGAFSIQGIGAFLIDIIEGNYTTILGLPLPQLVKRLLKRKAIKVVLNKNSEETISSDFLTYSR.

The active-site Proton acceptor is aspartate 81.

The protein belongs to the Maf family. YhdE subfamily. It depends on a divalent metal cation as a cofactor.

Its subcellular location is the cytoplasm. It catalyses the reaction dTTP + H2O = dTMP + diphosphate + H(+). The catalysed reaction is UTP + H2O = UMP + diphosphate + H(+). In terms of biological role, nucleoside triphosphate pyrophosphatase that hydrolyzes dTTP and UTP. May have a dual role in cell division arrest and in preventing the incorporation of modified nucleotides into cellular nucleic acids. The polypeptide is dTTP/UTP pyrophosphatase (Lawsonia intracellularis (strain PHE/MN1-00)).